We begin with the raw amino-acid sequence, 302 residues long: Protein KTI12 homolog (302 aa).

8-15 (GQPCSGKS) is a binding site for ATP. Residues 260 to 273 (LRRTFVKLMGQSSL) form a calmodulin-binding region.

The protein belongs to the KTI12 family. As to quaternary structure, interacts with the elongator complex. Binds to calmodulin in a calcium-dependent manner. Expressed in roots, hypocotyls, cotyledons, shoot apices, stems, inflorescence apices, leaves and flowers.

It localises to the cytoplasm. The protein localises to the nucleus. Functionally, elongator complex-associated factor that is not a structural subunit but rather transiently contacts the complex. Regulates both meristem activity and organ growth; acts as a positive regulator of adaxial leaf patterning by modulating both cell division and differentiation. Required for an early step in synthesis of 5-carbamoylmethyl (ncm5) groups present on uridines (ncm5U) at the wobble position in tRNA. This is Protein KTI12 homolog from Arabidopsis thaliana (Mouse-ear cress).